An 872-amino-acid chain; its full sequence is DNA mismatch repair protein MutS (872 aa).

602-609 (GPNMSGKS) provides a ligand contact to ATP.

Belongs to the DNA mismatch repair MutS family.

This protein is involved in the repair of mismatches in DNA. It is possible that it carries out the mismatch recognition step. This protein has a weak ATPase activity. This is DNA mismatch repair protein MutS from Staphylococcus aureus (strain Mu3 / ATCC 700698).